Reading from the N-terminus, the 130-residue chain is Small ribosomal subunit protein uS9 (130 aa).

Belongs to the universal ribosomal protein uS9 family.

The polypeptide is Small ribosomal subunit protein uS9 (Phytoplasma australiense).